Here is a 210-residue protein sequence, read N- to C-terminus: Pyridoxine/pyridoxamine 5'-phosphate oxidase (210 aa).

Substrate is bound by residues 7–10 and K65; that span reads REDY. FMN-binding positions include 60-65, 75-76, R81, K82, and Q104; these read RVVLLK and FT. Substrate is bound by residues Y122, R126, and S130. FMN is bound by residues 139-140 and W183; that span reads QS. 189-191 contacts substrate; it reads RLH. Residue R193 participates in FMN binding.

Belongs to the pyridoxamine 5'-phosphate oxidase family. As to quaternary structure, homodimer. The cofactor is FMN.

It catalyses the reaction pyridoxamine 5'-phosphate + O2 + H2O = pyridoxal 5'-phosphate + H2O2 + NH4(+). The catalysed reaction is pyridoxine 5'-phosphate + O2 = pyridoxal 5'-phosphate + H2O2. The protein operates within cofactor metabolism; pyridoxal 5'-phosphate salvage; pyridoxal 5'-phosphate from pyridoxamine 5'-phosphate: step 1/1. Its pathway is cofactor metabolism; pyridoxal 5'-phosphate salvage; pyridoxal 5'-phosphate from pyridoxine 5'-phosphate: step 1/1. Its function is as follows. Catalyzes the oxidation of either pyridoxine 5'-phosphate (PNP) or pyridoxamine 5'-phosphate (PMP) into pyridoxal 5'-phosphate (PLP). This Actinobacillus succinogenes (strain ATCC 55618 / DSM 22257 / CCUG 43843 / 130Z) protein is Pyridoxine/pyridoxamine 5'-phosphate oxidase.